Consider the following 402-residue polypeptide: Uroporphyrinogen decarboxylase 1, chloroplastic (402 aa).

A chloroplast-targeting transit peptide spans Met-1–Arg-50. Residues Arg-67–Arg-71, Phe-86, Ser-116, Asp-117, Tyr-193, Ser-248, and His-363 contribute to the substrate site.

It belongs to the uroporphyrinogen decarboxylase family. As to quaternary structure, homodimer.

Its subcellular location is the plastid. The protein resides in the chloroplast. It carries out the reaction uroporphyrinogen III + 4 H(+) = coproporphyrinogen III + 4 CO2. It functions in the pathway porphyrin-containing compound metabolism; protoporphyrin-IX biosynthesis; coproporphyrinogen-III from 5-aminolevulinate: step 4/4. Its function is as follows. Catalyzes the decarboxylation of four acetate groups of uroporphyrinogen-III to yield coproporphyrinogen-III. The chain is Uroporphyrinogen decarboxylase 1, chloroplastic from Oryza sativa subsp. japonica (Rice).